Consider the following 805-residue polypeptide: Leucine--tRNA ligase (805 aa).

Positions 41 to 52 match the 'HIGH' region motif; it reads PYPSGAGLHVGH. The short motif at 577 to 581 is the 'KMSKS' region element; sequence KMSKS. Lys-580 contacts ATP.

Belongs to the class-I aminoacyl-tRNA synthetase family.

It localises to the cytoplasm. The enzyme catalyses tRNA(Leu) + L-leucine + ATP = L-leucyl-tRNA(Leu) + AMP + diphosphate. The sequence is that of Leucine--tRNA ligase from Staphylococcus aureus (strain USA300).